Here is a 215-residue protein sequence, read N- to C-terminus: Cytochrome b6 (215 aa).

The helical transmembrane segment at 32–52 (LFYCLGGITLTCFLIQVATGF) threads the bilayer. Cysteine 35 is a binding site for heme c. 2 residues coordinate heme b: histidine 86 and histidine 100. Transmembrane regions (helical) follow at residues 90–110 (ASMM…TGGF), 116–136 (STWV…VTGY), and 186–206 (LHTF…FLMI). Residues histidine 187 and histidine 202 each contribute to the heme b site.

The protein belongs to the cytochrome b family. PetB subfamily. The 4 large subunits of the cytochrome b6-f complex are cytochrome b6, subunit IV (17 kDa polypeptide, PetD), cytochrome f and the Rieske protein, while the 4 small subunits are PetG, PetL, PetM and PetN. The complex functions as a dimer. The cofactor is heme b. Heme c is required as a cofactor.

It localises to the plastid. The protein localises to the chloroplast thylakoid membrane. Functionally, component of the cytochrome b6-f complex, which mediates electron transfer between photosystem II (PSII) and photosystem I (PSI), cyclic electron flow around PSI, and state transitions. The chain is Cytochrome b6 from Bigelowiella natans (Pedinomonas minutissima).